A 450-amino-acid chain; its full sequence is Class E vacuolar protein-sorting machinery protein HSE1 (450 aa).

The region spanning 15 to 145 is the VHS domain; the sequence is ATDGKLRSDN…RIRRKWPGLL (131 aa). 3 disordered regions span residues 141-167, 179-212, and 374-450; these read WPGLLEEPEKPSKQKVSHQEATDEDQE, FEKSKQQSNGSAVQSNSLQDHNQGQQQPQQQTTS, and PNTQ…PPNY. Residues 147-167 are compositionally biased toward basic and acidic residues; sequence EPEKPSKQKVSHQEATDEDQE. The UIM domain maps to 163-182; sequence DEDQELQRALKMSLEEFEKS. Positions 184 to 196 are enriched in polar residues; that stretch reads QQSNGSAVQSNSL. Positions 197–209 are enriched in low complexity; sequence QDHNQGQQQPQQQ. One can recognise an SH3 domain in the interval 212–271; it reads SGIRRVRALYDLNANEQDELSFRKGDVIVVLEQVYRDWWRGSLHGKIGIFPLNYVTPITE. Over residues 394–432 the composition is skewed to low complexity; the sequence is NNTYQTTNGQYTQHNITPQQQYQVPSQNYQSQPPSMQSN.

Belongs to the STAM family. Component of the ESCRT-0 complex composed of HSE1 and VPS27.

It localises to the endosome membrane. Its function is as follows. Component of the ESCRT-0 complex which is the sorting receptor for ubiquitinated cargo proteins at the multivesicular body (MVB). The protein is Class E vacuolar protein-sorting machinery protein HSE1 (HSE1) of Candida glabrata (strain ATCC 2001 / BCRC 20586 / JCM 3761 / NBRC 0622 / NRRL Y-65 / CBS 138) (Yeast).